A 758-amino-acid chain; its full sequence is Meiotic driver SPOK4 (758 aa).

The stretch at 4–41 (KDRITQLLRKLEEAKAREEEAKAREAQERCEKERLQLE) forms a coiled coil. 2 disordered regions span residues 180–230 (ELTQ…GVGI) and 414–499 (LSSA…MADP). The span at 181 to 190 (LTQEDDRSSG) shows a compositional bias: basic and acidic residues. Polar residues predominate over residues 416 to 429 (SAASSQNTENSEYT). Positions 457 to 468 (NEHDEHDEDHSE) are enriched in basic and acidic residues.

The protein localises to the cytoplasm. Its subcellular location is the nucleus. In terms of biological role, promotes unequal transmission of alleles from the parental zygote to progeny spores by acting as poison/antidote system, leading to poisoning of progeny that do not inherit the allele. May possess DNA nuclease activity that leads to spore killing, and a kinase activity that confers resistance to the nuclease activity. Can suppress meiotic drive by the P.comata SPOK1 protein. The sequence is that of Meiotic driver SPOK4 from Podospora anserina (Pleurage anserina).